Here is a 393-residue protein sequence, read N- to C-terminus: Protein TsgA (393 aa).

Helical transmembrane passes span 11–31, 51–71, 78–98, 101–121, 134–154, 162–182, 206–226, 245–265, 273–293, 297–317, 332–352, and 361–381; these read WISFLSYALTGALVIVTGMVM, FLNAGILISIFLNAWLMEIVP, FGFLLMVLAVAGLMFSHSLAL, AAMFILGVVSGITMSIGTFLI, LLFTDSFFSMAGMIFPMIAAF, WYWVYACIGLVYVAIFILTFG, IGVLFLSVAALCYILGQLGFI, TLVSNFWMSYMVGMWAFSFIL, ILTVLAGLAAILMYVFNTGTP, AWSILTLGFFSSAIYTTIITL, FVLTCGTIGTMLTFVVTGPIV, and LLTANGLYAVVFVMCFLLGFV.

This sequence belongs to the major facilitator superfamily. TsgA family.

It localises to the cell inner membrane. This Shigella dysenteriae serotype 1 (strain Sd197) protein is Protein TsgA.